A 1299-amino-acid chain; its full sequence is DNA-directed RNA polymerase subunit beta' (1299 aa).

4 residues coordinate Zn(2+): cysteine 60, cysteine 62, cysteine 75, and cysteine 78. Mg(2+) contacts are provided by aspartate 535, aspartate 537, and aspartate 539. Cysteine 877, cysteine 954, cysteine 961, and cysteine 964 together coordinate Zn(2+).

This sequence belongs to the RNA polymerase beta' chain family. The RNAP catalytic core consists of 2 alpha, 1 beta, 1 beta' and 1 omega subunit. When a sigma factor is associated with the core the holoenzyme is formed, which can initiate transcription. It depends on Mg(2+) as a cofactor. Requires Zn(2+) as cofactor.

The catalysed reaction is RNA(n) + a ribonucleoside 5'-triphosphate = RNA(n+1) + diphosphate. Its function is as follows. DNA-dependent RNA polymerase catalyzes the transcription of DNA into RNA using the four ribonucleoside triphosphates as substrates. This Renibacterium salmoninarum (strain ATCC 33209 / DSM 20767 / JCM 11484 / NBRC 15589 / NCIMB 2235) protein is DNA-directed RNA polymerase subunit beta'.